Consider the following 206-residue polypeptide: Holliday junction branch migration complex subunit RuvA (206 aa).

The segment at 1 to 62 is domain I; sequence MYDYLKGLIT…EDAQVLYGFP (62 aa). The domain II stretch occupies residues 63-141; it reads NLDQRELFRK…SLLETIELPS (79 aa). The interval 142-152 is flexible linker; sequence TEDELPLFGVH. The interval 153–206 is domain III; that stretch reads PYKHELEEAILALAALGYSEKELEKIRPLLEDNDKLETTDAYMKQALQLLLKLK.

The protein belongs to the RuvA family. As to quaternary structure, homotetramer. Forms an RuvA(8)-RuvB(12)-Holliday junction (HJ) complex. HJ DNA is sandwiched between 2 RuvA tetramers; dsDNA enters through RuvA and exits via RuvB. An RuvB hexamer assembles on each DNA strand where it exits the tetramer. Each RuvB hexamer is contacted by two RuvA subunits (via domain III) on 2 adjacent RuvB subunits; this complex drives branch migration. In the full resolvosome a probable DNA-RuvA(4)-RuvB(12)-RuvC(2) complex forms which resolves the HJ.

It is found in the cytoplasm. The RuvA-RuvB-RuvC complex processes Holliday junction (HJ) DNA during genetic recombination and DNA repair, while the RuvA-RuvB complex plays an important role in the rescue of blocked DNA replication forks via replication fork reversal (RFR). RuvA specifically binds to HJ cruciform DNA, conferring on it an open structure. The RuvB hexamer acts as an ATP-dependent pump, pulling dsDNA into and through the RuvAB complex. HJ branch migration allows RuvC to scan DNA until it finds its consensus sequence, where it cleaves and resolves the cruciform DNA. The protein is Holliday junction branch migration complex subunit RuvA of Lysinibacillus sphaericus (strain C3-41).